We begin with the raw amino-acid sequence, 525 residues long: Nucleolar complex protein 4 homolog (525 aa).

A run of 3 helical transmembrane segments spans residues 305 to 325 (AAYDIGGAISLSALNGLFVPI), 356 to 376 (FFHLANIFLSSTHLPVYLVAA), and 384 to 404 (LSLTAPPTALLILLPFICNLI).

The protein belongs to the CBF/MAK21 family.

The protein localises to the nucleus membrane. The protein resides in the nucleus. Its subcellular location is the nucleolus. This is Nucleolar complex protein 4 homolog (noc4l) from Danio rerio (Zebrafish).